The primary structure comprises 166 residues: uncharacterized protein (166 aa).

Residues Ser73–Ala88 are compositionally biased toward low complexity. Disordered stretches follow at residues Ser73–Lys101 and Pro126–Asn166. The span at Val89–Lys101 shows a compositional bias: basic and acidic residues. The span at Ser134–Pro154 shows a compositional bias: low complexity. Over residues Thr155–Asn166 the composition is skewed to polar residues.

This is an uncharacterized protein from Dictyostelium discoideum (Social amoeba).